Reading from the N-terminus, the 331-residue chain is Ketol-acid reductoisomerase (NADP(+)) (331 aa).

In terms of domain architecture, KARI N-terminal Rossmann spans 2–182 (ARMYYDTDAN…GGTRAGILET (181 aa)). Residues 25-28 (YGSQ), Ser-51, Ser-53, and 83-86 (DEVQ) each bind NADP(+). Residue His-108 is part of the active site. Gly-134 contacts NADP(+). Positions 183–328 (TFREETETDL…KDLRAMFSWL (146 aa)) constitute a KARI C-terminal knotted domain. Residues Asp-191, Glu-195, Glu-227, and Glu-231 each coordinate Mg(2+). Substrate is bound at residue Ser-252.

It belongs to the ketol-acid reductoisomerase family. The cofactor is Mg(2+).

The catalysed reaction is (2R)-2,3-dihydroxy-3-methylbutanoate + NADP(+) = (2S)-2-acetolactate + NADPH + H(+). It carries out the reaction (2R,3R)-2,3-dihydroxy-3-methylpentanoate + NADP(+) = (S)-2-ethyl-2-hydroxy-3-oxobutanoate + NADPH + H(+). It functions in the pathway amino-acid biosynthesis; L-isoleucine biosynthesis; L-isoleucine from 2-oxobutanoate: step 2/4. Its pathway is amino-acid biosynthesis; L-valine biosynthesis; L-valine from pyruvate: step 2/4. Functionally, involved in the biosynthesis of branched-chain amino acids (BCAA). Catalyzes an alkyl-migration followed by a ketol-acid reduction of (S)-2-acetolactate (S2AL) to yield (R)-2,3-dihydroxy-isovalerate. In the isomerase reaction, S2AL is rearranged via a Mg-dependent methyl migration to produce 3-hydroxy-3-methyl-2-ketobutyrate (HMKB). In the reductase reaction, this 2-ketoacid undergoes a metal-dependent reduction by NADPH to yield (R)-2,3-dihydroxy-isovalerate. This chain is Ketol-acid reductoisomerase (NADP(+)), found in Rippkaea orientalis (strain PCC 8801 / RF-1) (Cyanothece sp. (strain PCC 8801)).